We begin with the raw amino-acid sequence, 1044 residues long: MPIQEAEKSYRPHRIEEKVQSFWEERDIYERVKELREDRPRYSFLDGPPYCSGRIHLGTAWNKIMKDTYLRFKSMKGFNVRRQPGWDTHGLPIEHKVEGLLGVRSKKDIEDKIGIEEFVNKCREFAVENKAVMTGQFQRLGVWMDWDDPYVTFDPAYMESCWWTLKRAHEKDLLVRDLRVITWCPRCETALALAEIDYHDKEDPSIYVKFPVSGDTHILVWTTTPWTLPANMAVAVHPDFEYAYARLDGETYIMAEALVEKVLGEEAEILKRVKGTELEGLTYRHPLDDEVPLHREIEHRVILGDHVTLTEGTGCVHTAPGHGPEDFEIGKKYGLEVICPVDEAGIFTEEAGKYSGRFVKDADEDIIADLRSKGLLLKAGTISHRYGFCWRCKTPIIYLATEQWFLKITEIKDKMLRELDRVQWVPSWAGESRFRNWIENARDWTISRQRYWGIPIPIWICEECDSIHVVGSIDELRELAVEGELEGDFIHRPHVDRIVLECGECGGRMKRTPDVLDVWIDSGVAGWAALHYPSETELFREWFPYDFITEGHDQTRGWFYSQLGCGVIALDEVPYRRVLMHGFTLDEEGRKMSKSLGNVVEPEDVIEKYGADVLRFYLLWENKPWEDLKFVWDELRNVNKMFNILWNVYVFATTYMSLDRFQPGDHSAEDLSFRDEDRWILSRINSVALKVTEAIENLHFHRATREIHDFIVEDLSRWYIRLIRSRTWIERDDPDKLAAYHTLYTVLKTLIVTLSPMAPHVCEDIYQNLVRGAEPDSPESIHMLDWILDEGAVDSQLEADMDIVREIIEACARARDTARYKLRWPVREMVVVSEDEGVLKAAESLKNVIAEQANAKSIKTSTEFPDMKIIARPNPATLGPRLRQDIPLVMRELEGADGSAVKAALDSDGEFTVETDGKKFKLTSEDIVFETELPENIVSAQFDGGSVFIDTELTPEIMSEAMARELVRRIQDMRKDLDLDVEASIEVSVKCSEEFRELTEPQREFIENEVRASTLSFDYSELEYTKEWKISDENLIISIKPAKV.

The 'HIGH' region motif lies at 49–59; the sequence is PYCSGRIHLGT. Positions 591–595 match the 'KMSKS' region motif; sequence KMSKS. K594 is a binding site for ATP.

The protein belongs to the class-I aminoacyl-tRNA synthetase family. IleS type 2 subfamily. Monomer. Zn(2+) is required as a cofactor.

It localises to the cytoplasm. It catalyses the reaction tRNA(Ile) + L-isoleucine + ATP = L-isoleucyl-tRNA(Ile) + AMP + diphosphate. Its function is as follows. Catalyzes the attachment of isoleucine to tRNA(Ile). As IleRS can inadvertently accommodate and process structurally similar amino acids such as valine, to avoid such errors it has two additional distinct tRNA(Ile)-dependent editing activities. One activity is designated as 'pretransfer' editing and involves the hydrolysis of activated Val-AMP. The other activity is designated 'posttransfer' editing and involves deacylation of mischarged Val-tRNA(Ile). The chain is Isoleucine--tRNA ligase from Methanothermobacter thermautotrophicus (strain ATCC 29096 / DSM 1053 / JCM 10044 / NBRC 100330 / Delta H) (Methanobacterium thermoautotrophicum).